We begin with the raw amino-acid sequence, 27 residues long: Secretin (27 aa).

At Val27 the chain carries Valine amide.

This sequence belongs to the glucagon family.

The protein resides in the secreted. Hormone involved in different processes, such as regulation of the pH of the duodenal content, food intake and water homeostasis. Exerts its biological effects by binding to secretin receptor (SCTR), a G-protein coupled receptor expressed in the basolateral domain of several cells. Acts as a key gastrointestinal hormone by regulating the pH of the duodenal content. Secreted by S cells of the duodenum in the crypts of Lieberkuehn and regulates the pH of the duodenum by (1) inhibiting the secretion of gastric acid from the parietal cells of the stomach and (2) stimulating the production of bicarbonate (NaHCO(3)) from the ductal cells of the pancreas. Production of bicarbonate is essential to neutralize the pH and ensure no damage is done to the small intestine by the gastric acid. In addition to regulating the pH of the duodenal content, plays a central role in diet induced thermogenesis: acts as a non-sympathetic brown fat (BAT) activator mediating prandial thermogenesis, which consequentially induces satiation. Mechanistically, secretin released by the gut after a meal binds to secretin receptor (SCTR) in brown adipocytes, activating brown fat thermogenesis by stimulating lipolysis, which is sensed in the brain and promotes satiation. Also able to stimulate lipolysis in white adipocytes. Also plays an important role in cellular osmoregulation: released into the systemic circulation in response to hyperosmolality and acts at different levels in the hypothalamus, pituitary and kidney to regulate water homeostasis. Also plays a role in the central nervous system, possibly by acting as a neuropeptide hormone: required for hippocampal synaptic function and neural progenitor cells maintenance. This is Secretin from Bos taurus (Bovine).